Reading from the N-terminus, the 446-residue chain is N-succinylarginine dihydrolase 2 (446 aa).

Substrate contacts are provided by residues 20 to 29 (VGLSPGNLAS), Asn111, and 138 to 139 (HR). Glu175 is an active-site residue. Arg212 contacts substrate. His246 is an active-site residue. Residues Asp248 and Asn361 each coordinate substrate. The active-site Nucleophile is Cys367.

Belongs to the succinylarginine dihydrolase family. Homodimer.

The catalysed reaction is N(2)-succinyl-L-arginine + 2 H2O + 2 H(+) = N(2)-succinyl-L-ornithine + 2 NH4(+) + CO2. It participates in amino-acid degradation; L-arginine degradation via AST pathway; L-glutamate and succinate from L-arginine: step 2/5. Catalyzes the hydrolysis of N(2)-succinylarginine into N(2)-succinylornithine, ammonia and CO(2). This is N-succinylarginine dihydrolase 2 from Caulobacter vibrioides (strain ATCC 19089 / CIP 103742 / CB 15) (Caulobacter crescentus).